The following is a 171-amino-acid chain: MVLVKMALGFLILLSPLCAMELDISQTDIIERSLNFLLFVGILWYFLAKKLRSFLHAKSLEISKHLDEIQAQLKASKENKKKLLKELEQAKEKAELIVSDANKEAYTITQKYELQTKIDVENLIKNSKALMDLEVKKIKRELVESVFKDLRESKKVSFSTQDCVNILKQRL.

The chain crosses the membrane as a helical span at residues 2–22 (VLVKMALGFLILLSPLCAMEL).

It belongs to the ATPase B chain family. F-type ATPases have 2 components, F(1) - the catalytic core - and F(0) - the membrane proton channel. F(1) has five subunits: alpha(3), beta(3), gamma(1), delta(1), epsilon(1). F(0) has three main subunits: a(1), b(2) and c(10-14). The alpha and beta chains form an alternating ring which encloses part of the gamma chain. F(1) is attached to F(0) by a central stalk formed by the gamma and epsilon chains, while a peripheral stalk is formed by the delta and b chains.

Its subcellular location is the cell inner membrane. Its function is as follows. F(1)F(0) ATP synthase produces ATP from ADP in the presence of a proton or sodium gradient. F-type ATPases consist of two structural domains, F(1) containing the extramembraneous catalytic core and F(0) containing the membrane proton channel, linked together by a central stalk and a peripheral stalk. During catalysis, ATP synthesis in the catalytic domain of F(1) is coupled via a rotary mechanism of the central stalk subunits to proton translocation. Functionally, component of the F(0) channel, it forms part of the peripheral stalk, linking F(1) to F(0). The chain is ATP synthase subunit b from Helicobacter acinonychis (strain Sheeba).